A 746-amino-acid polypeptide reads, in one-letter code: Exostosin-1 (746 aa).

Residues 1 to 7 (MQAKKRY) lie on the Cytoplasmic side of the membrane. The helical; Signal-anchor for type II membrane protein transmembrane segment at 8–28 (FILLSAGSCLALLFYFGGLQF) threads the bilayer. Residues 29–746 (RASRSHSRRE…RKKYRDIERL (718 aa)) are Lumenal-facing. A glycan (N-linked (GlcNAc...) asparagine) is linked at N89. Cystine bridges form between C98-C103 and C109-C152. A protein contacts are provided by L166 and Y203. Residues K267, K269, Y271, and R280 each contribute to the UDP site. A disulfide bridge connects residues C298 and C312. H300 is a binding site for a protein. UDP contacts are provided by Y319 and Y324. A glycan (N-linked (GlcNAc...) asparagine) is linked at N330. 2 disulfides stabilise this stretch: C334–C355 and C652–C704. UDP is bound by residues R346 and E349.

Belongs to the glycosyltransferase 47 family. In terms of assembly, part of the heparan sulfate polymerase, a dimeric complex composed of EXT1 and EXT2. Could also form homooligomeric complexes. Interacts with NDST1. Post-translationally, N-glycosylated.

It is found in the golgi apparatus membrane. It localises to the golgi apparatus. Its subcellular location is the cis-Golgi network membrane. The protein localises to the endoplasmic reticulum membrane. It catalyses the reaction 3-O-{alpha-D-GlcNAc-[(1-&gt;4)-beta-D-GlcA-(1-&gt;4)-alpha-D-GlcNAc](n)-(1-&gt;4)-beta-D-GlcA-(1-&gt;3)-beta-D-Gal-(1-&gt;3)-beta-D-Gal-(1-&gt;4)-beta-D-Xyl}-L-seryl-[protein] + UDP-alpha-D-glucuronate = 3-O-{[(1-&gt;4)-beta-D-GlcA-(1-&gt;4)-alpha-D-GlcNAc](n+1)-(1-&gt;4)-beta-D-GlcA-(1-&gt;3)-beta-D-Gal-(1-&gt;3)-beta-D-Gal-(1-&gt;4)-beta-D-Xyl}-L-seryl-[protein] + UDP + H(+). It functions in the pathway protein modification; protein glycosylation. Functionally, glycosyltransferase forming with EXT2 the heterodimeric heparan sulfate polymerase which catalyzes the elongation of the heparan sulfate glycan backbone. Glycan backbone extension consists in the alternating transfer of (1-&gt;4)-beta-D-GlcA and (1-&gt;4)-alpha-D-GlcNAc residues from their respective UDP-sugar donors. Both EXT1 and EXT2 are required for the full activity of the polymerase since EXT1 bears the N-acetylglucosaminyl-proteoglycan 4-beta-glucuronosyltransferase activity within the complex while EXT2 carries the glucuronosyl-N-acetylglucosaminyl-proteoglycan 4-alpha-N-acetylglucosaminyltransferase activity. Heparan sulfate proteoglycans are ubiquitous components of the extracellular matrix and play an important role in tissue homeostasis and signaling. In Papio anubis (Olive baboon), this protein is Exostosin-1 (EXT1).